The following is a 263-amino-acid chain: TPR repeat-containing protein DDB_G0285095 (263 aa).

A compositionally biased stretch (basic and acidic residues) spans 1–25; it reads MGCCGSKEKYNGEDVPKSQRLENRP. The tract at residues 1–62 is disordered; that stretch reads MGCCGSKEKY…ASASQQNNPT (62 aa). TPR repeat units lie at residues 87-120, 121-154, and 162-195; these read SDLL…DTDN, SRAW…AAPK, and SSLL…GARS.

The polypeptide is TPR repeat-containing protein DDB_G0285095 (Dictyostelium discoideum (Social amoeba)).